A 398-amino-acid polypeptide reads, in one-letter code: NADH-quinone oxidoreductase subunit D (398 aa).

This sequence belongs to the complex I 49 kDa subunit family. In terms of assembly, NDH-1 is composed of 14 different subunits. Subunits NuoB, C, D, E, F, and G constitute the peripheral sector of the complex.

The protein resides in the cell inner membrane. It carries out the reaction a quinone + NADH + 5 H(+)(in) = a quinol + NAD(+) + 4 H(+)(out). In terms of biological role, NDH-1 shuttles electrons from NADH, via FMN and iron-sulfur (Fe-S) centers, to quinones in the respiratory chain. The immediate electron acceptor for the enzyme in this species is believed to be ubiquinone. Couples the redox reaction to proton translocation (for every two electrons transferred, four hydrogen ions are translocated across the cytoplasmic membrane), and thus conserves the redox energy in a proton gradient. The protein is NADH-quinone oxidoreductase subunit D of Caulobacter vibrioides (strain ATCC 19089 / CIP 103742 / CB 15) (Caulobacter crescentus).